The following is a 158-amino-acid chain: SKP1-like protein 18 (158 aa).

The segment at 99 to 157 (ILAANYLNFEGLLGFASQTVADYIKDKTPEEVREIFNIENDFTPEEEEEIRKENAWTFN) is interaction with the F-box domain of F-box proteins.

This sequence belongs to the SKP1 family. Part of a SCF (SKP1-cullin-F-box) protein ligase complex. Interacts with CPR1/CPR30, EBF1, SKP2A, At3g61590, At4g38940 and At5g49610. As to expression, expressed in young seedlings, roots, leaves, floral stems, inflorescences, pollen, and siliques.

The protein resides in the nucleus. The protein operates within protein modification; protein ubiquitination. Involved in ubiquitination and subsequent proteasomal degradation of target proteins. Together with CUL1, RBX1 and a F-box protein, it forms a SCF E3 ubiquitin ligase complex. The functional specificity of this complex depends on the type of F-box protein. In the SCF complex, it serves as an adapter that links the F-box protein to CUL1. In Arabidopsis thaliana (Mouse-ear cress), this protein is SKP1-like protein 18 (ASK18).